A 471-amino-acid chain; its full sequence is 4-aminobutyrate aminotransferase (471 aa).

135 to 136 lines the pyridoxal 5'-phosphate pocket; that stretch reads GA. Substrate is bound at residue Arg-192. Lys-326 bears the N6-(pyridoxal phosphate)lysine mark. Position 351 (Thr-351) interacts with pyridoxal 5'-phosphate.

Belongs to the class-III pyridoxal-phosphate-dependent aminotransferase family. In terms of assembly, homodimer and homotetramer. The cofactor is pyridoxal 5'-phosphate.

The protein resides in the cytoplasm. It carries out the reaction 4-aminobutanoate + 2-oxoglutarate = succinate semialdehyde + L-glutamate. In terms of biological role, required for the degradation of gamma-aminobutyric acid (GABA), which is important for utilization of GABA as nitrogen source and for oxidative stress tolerance. Deaminates GABA to succinate semialdehyde, which in turn is converted to succinate by the succinate-semialdehyde dehydrogenase UGA2. Cannot transaminate beta-alanine (BAL). The chain is 4-aminobutyrate aminotransferase (UGA1) from Saccharomyces cerevisiae (strain ATCC 204508 / S288c) (Baker's yeast).